The sequence spans 78 residues: uncharacterized protein (78 aa).

The next 2 membrane-spanning stretches (helical) occupy residues 7-27 (ICLV…FFQF) and 41-61 (LSRI…GLLF).

It is found in the cell membrane. This is an uncharacterized protein from Bacillus subtilis (strain 168).